A 398-amino-acid chain; its full sequence is Dual-specificity RNA methyltransferase RlmN (398 aa).

Glutamate 119 acts as the Proton acceptor in catalysis. A Radical SAM core domain is found at aspartate 125–aspartate 364. Residues cysteine 132 and cysteine 369 are joined by a disulfide bond. Cysteine 139, cysteine 143, and cysteine 146 together coordinate [4Fe-4S] cluster. S-adenosyl-L-methionine contacts are provided by residues glycine 193–glutamate 194, serine 225, serine 247–histidine 249, and asparagine 326. Cysteine 369 (S-methylcysteine intermediate) is an active-site residue.

This sequence belongs to the radical SAM superfamily. RlmN family. The cofactor is [4Fe-4S] cluster.

The protein localises to the cytoplasm. It carries out the reaction adenosine(2503) in 23S rRNA + 2 reduced [2Fe-2S]-[ferredoxin] + 2 S-adenosyl-L-methionine = 2-methyladenosine(2503) in 23S rRNA + 5'-deoxyadenosine + L-methionine + 2 oxidized [2Fe-2S]-[ferredoxin] + S-adenosyl-L-homocysteine. The enzyme catalyses adenosine(37) in tRNA + 2 reduced [2Fe-2S]-[ferredoxin] + 2 S-adenosyl-L-methionine = 2-methyladenosine(37) in tRNA + 5'-deoxyadenosine + L-methionine + 2 oxidized [2Fe-2S]-[ferredoxin] + S-adenosyl-L-homocysteine. Specifically methylates position 2 of adenine 2503 in 23S rRNA and position 2 of adenine 37 in tRNAs. m2A2503 modification seems to play a crucial role in the proofreading step occurring at the peptidyl transferase center and thus would serve to optimize ribosomal fidelity. This is Dual-specificity RNA methyltransferase RlmN from Serratia proteamaculans (strain 568).